A 976-amino-acid chain; its full sequence is MSNSNTTQETLEIMKESEKKLVEESVNKNKFISKTPSKEEIEKECEDTSLRQETQRRTSNHGHARKRAKSNSKLKLVRSLAVCEESSTPFADGPLETQDIIQLHISCPSDKEEEKSTKDVSEKEDKDKNKEKIPRKMLSRDSSQEYTDSTGIDLHEFLVNTLKKNPRDRMMLLKLEQEILEFINDNNNQFKKFPQMTSYHRMLLHRVAAYFGMDHNVDQTGKAVIINKTSNTRIPEQRFSEHIKDEKNTEFQQRFILKRDDASMDRDDNQTGQNGYLNDIRLSKEAFSSSSHKRRQIFRGNREGLSRTSSSRQSSTDSELKSLEPRPWSSTDSDGSVRSMRPPVTKASSFSGISILTRGDSIGSSKGGSAGRISRPGMALGAPEVCNQVTSSQSVRGLLPCTAQQQQQQQQQQLPALPPTPQQQPPLNNHMISQADDLSNPFGQMSLSRQGSTEAADPSAALFQTPLISQHPQQTSFIMASTGQPLPTSNYSTSSHAPPTQQVLPPQGYMQPPQQIQVSYYPPGQYPNSNQQYRPLSHPVAYSPQRGQQLPQPSQQPGLQPMMPNQQQAAYQGMIGVQQPQNQGLLSSQRSSMGGQMQGLVVQYTPLPSYQVPVGSDSQNVVQPPFQQPMLVPVSQSVQGGLPAAGVPVYYSMIPPAQQNGTSPSVGFLQPPGSEQYQMPQSPSPCSPPQMPQQYSGVSPSGPGVVVMQLNVPNGPQPPQNPSMVQWSHCKYYSMDQRGQKPGDLYSPDSSPQANTQMSSSPVTSPTQSPAPSPVTSLSSVCTGLSPLPVLTQFPRPGGPAQGDGRYSLLGQPLQYNLSICPPLLHGQSTYTVHQGQSGLKHGNRGKRQALKSASTDLGTADVVLGRVLEVTDLPEGITRTEADKLFTQLAMSGAKIQWLKDAQGLPGGGGGDNSGTAENGRHSDLAALYTIVAVFPSPLAAQNASLRLNNSVSRFKLRMAKKNYDLRILERASSQ.

Disordered stretches follow at residues 32-71 and 105-147; these read ISKT…AKSN and ISCP…QEYT. Positions 36–56 are enriched in basic and acidic residues; the sequence is PSKEEIEKECEDTSLRQETQR. Serine 37 bears the Phosphoserine mark. Residues 58-71 are compositionally biased toward basic residues; sequence TSNHGHARKRAKSN. Residues 109–143 are compositionally biased toward basic and acidic residues; sequence SDKEEEKSTKDVSEKEDKDKNKEKIPRKMLSRDSS. Position 143 is a phosphoserine (serine 143). Residues 169-232 enclose the R3H domain; the sequence is RMMLLKLEQE…AVIINKTSNT (64 aa). The 78-residue stretch at 233 to 310 folds into the SUZ domain; the sequence is RIPEQRFSEH…NREGLSRTSS (78 aa). Over residues 257–269 the composition is skewed to basic and acidic residues; it reads LKRDDASMDRDDN. Disordered stretches follow at residues 257–376, 401–457, 480–560, 661–725, and 738–780; these read LKRD…ISRP, CTAQ…EAAD, ASTG…PGLQ, GTSP…PSMV, and RGQK…SLSS. A compositionally biased stretch (low complexity) spans 306-317; the sequence is SRTSSSRQSSTD. 3 positions are modified to phosphoserine: serine 330, serine 333, and serine 349. Residues 401-415 are compositionally biased toward low complexity; it reads CTAQQQQQQQQQQLP. Composition is skewed to polar residues over residues 441–453 and 480–504; these read PFGQ…QGST and ASTG…QQVL. Over residues 543-560 the composition is skewed to low complexity; it reads SPQRGQQLPQPSQQPGLQ. The span at 682–691 shows a compositional bias: pro residues; sequence SPSPCSPPQM. Residues 692–714 are compositionally biased toward low complexity; it reads PQQYSGVSPSGPGVVVMQLNVPN. Residues 748–758 show a composition bias toward polar residues; it reads PDSSPQANTQM. Low complexity predominate over residues 759–777; it reads SSSPVTSPTQSPAPSPVTS. Phosphoserine is present on residues serine 853 and serine 855. Phosphothreonine occurs at positions 856 and 860.

It is found in the nucleus. In Homo sapiens (Human), this protein is R3H domain-containing protein 2 (R3HDM2).